A 587-amino-acid chain; its full sequence is MQEQKLQENDFSTLQTFKRLWPMIKPFKAGLIVSGVALVFNALADSGLIYLLKPLLDDGFGKANHSFLKMMAFVVVGMIILRGITNFISNYCLAWVSGKVVMTMRRRLFKHLMFMPVSFFDQNSTGRLLSRITYDSQMIASSSSGSLITIVREGAYIISLFAVMFYTSWELTIVLFIIGPIIAVLIRLVSKIFRRLSKNLQDSMGELTSATEQMLKGHKVVLSFGGQHVEEVHFNHVSNDMRRKSMKMVTANSISDPVVQVIASLALATVLYLATTPLIAEDNLSAGSFTVVFSSMLAMMRPLKSLTAVNAQFQSGMAACQTLFAILDLEPEKDDGAYKAEPAKGELEFKNVSFAYQGKDELALNNISFSVPAGKTVALVGRSGSGKSTIANLVTRFYDIEQGEILLDGVNIQDYRLSNLRENCAVVSQQVHLFNDTIANNIAYAAQDKYSREEIIAAAKAAYALEFIEKLPQVFDTVIGENGTSLSGGQRQRLAIARALLRNSPVLILDEATSALDTESERAIQSALEELKKDRTVVVIAHRLSTIENADEILVIDHGEIRERGNHKTLLEQNGAYKQLHSMQFTG.

5 helical membrane passes run 31–51 (LIVS…LIYL), 68–88 (LKMM…TNFI), 145–165 (GSLI…AVMF), 166–186 (YTSW…AVLI), and 259–279 (VQVI…TPLI). An ABC transmembrane type-1 domain is found at 32–315 (IVSGVALVFN…LTAVNAQFQS (284 aa)). Residues 347–583 (LEFKNVSFAY…NGAYKQLHSM (237 aa)) form the ABC transporter domain. 381-388 (GRSGSGKS) is a binding site for ATP.

It belongs to the ABC transporter superfamily. Lipid exporter (TC 3.A.1.106) family. Homodimer.

Its subcellular location is the cell inner membrane. It catalyses the reaction ATP + H2O + lipid A-core oligosaccharideSide 1 = ADP + phosphate + lipid A-core oligosaccharideSide 2.. Its function is as follows. Involved in lipopolysaccharide (LPS) biosynthesis. Translocates lipid A-core from the inner to the outer leaflet of the inner membrane. Transmembrane domains (TMD) form a pore in the inner membrane and the ATP-binding domain (NBD) is responsible for energy generation. The protein is ATP-dependent lipid A-core flippase of Haemophilus influenzae (strain ATCC 51907 / DSM 11121 / KW20 / Rd).